Here is a 280-residue protein sequence, read N- to C-terminus: MIDKEYQRIMTERTASAPRAKKSLGQNFLQDKNISAKIVAALQIGPADCVIEIGPGPGALTDFIQKAAPASLWLLEKDTYWAGEHRRSDSRTPVEKQVVLTDALTFPWERLSDDRSWKLIGNLPYNVASPLMWDCLSLAAFSRAVFMIQKEVGDRIVAAPRSRQYGALSVWLQSHTVPRKELIVPPTVFKPRPKVDSAVLSFAPLPLSARNFSPGALSVLLKICFQQRRKQLQKILKRYWSDAVCGWFEQQGLPPAARPEELSPNQFQQLANLLESQLVS.

The S-adenosyl-L-methionine site is built by Asn27, Leu29, Gly54, Glu76, Asp102, and Asn122.

The protein belongs to the class I-like SAM-binding methyltransferase superfamily. rRNA adenine N(6)-methyltransferase family. RsmA subfamily.

It localises to the cytoplasm. It catalyses the reaction adenosine(1518)/adenosine(1519) in 16S rRNA + 4 S-adenosyl-L-methionine = N(6)-dimethyladenosine(1518)/N(6)-dimethyladenosine(1519) in 16S rRNA + 4 S-adenosyl-L-homocysteine + 4 H(+). Specifically dimethylates two adjacent adenosines (A1518 and A1519) in the loop of a conserved hairpin near the 3'-end of 16S rRNA in the 30S particle. May play a critical role in biogenesis of 30S subunits. This Oleidesulfovibrio alaskensis (strain ATCC BAA-1058 / DSM 17464 / G20) (Desulfovibrio alaskensis) protein is Ribosomal RNA small subunit methyltransferase A.